Consider the following 215-residue polypeptide: Small ribosomal subunit protein eS1 (215 aa).

This sequence belongs to the eukaryotic ribosomal protein eS1 family.

The chain is Small ribosomal subunit protein eS1 from Thermoplasma volcanium (strain ATCC 51530 / DSM 4299 / JCM 9571 / NBRC 15438 / GSS1).